The primary structure comprises 516 residues: GMP synthase [glutamine-hydrolyzing] (516 aa).

A Glutamine amidotransferase type-1 domain is found at 5-199; that stretch reads PIVILDFGSQ…ARKICGITSK (195 aa). The Nucleophile role is filled by cysteine 82. Catalysis depends on residues histidine 173 and glutamate 175. A GMPS ATP-PPase domain is found at 200–391; that stretch reads WDMGHFAKEQ…LGLPREMVYR (192 aa). Residue 227–233 coordinates ATP; that stretch reads SGGVDSS.

As to quaternary structure, homodimer.

It catalyses the reaction XMP + L-glutamine + ATP + H2O = GMP + L-glutamate + AMP + diphosphate + 2 H(+). It participates in purine metabolism; GMP biosynthesis; GMP from XMP (L-Gln route): step 1/1. Functionally, catalyzes the synthesis of GMP from XMP. In Nitratiruptor sp. (strain SB155-2), this protein is GMP synthase [glutamine-hydrolyzing].